We begin with the raw amino-acid sequence, 152 residues long: Xanthine-guanine phosphoribosyltransferase (152 aa).

5-phospho-alpha-D-ribose 1-diphosphate is bound by residues 37 to 38, arginine 69, and 88 to 96; these read RG and DDLVDTGGT. GMP is bound at residue arginine 69. Aspartate 89 is a Mg(2+) binding site. The guanine site is built by aspartate 92 and isoleucine 135. Xanthine is bound by residues aspartate 92 and isoleucine 135. GMP contacts are provided by residues 92-96 and 134-135; these read DTGGT and WI.

The protein belongs to the purine/pyrimidine phosphoribosyltransferase family. XGPT subfamily. In terms of assembly, homotetramer. The cofactor is Mg(2+).

It localises to the cell inner membrane. It catalyses the reaction GMP + diphosphate = guanine + 5-phospho-alpha-D-ribose 1-diphosphate. The enzyme catalyses XMP + diphosphate = xanthine + 5-phospho-alpha-D-ribose 1-diphosphate. The catalysed reaction is IMP + diphosphate = hypoxanthine + 5-phospho-alpha-D-ribose 1-diphosphate. The protein operates within purine metabolism; GMP biosynthesis via salvage pathway; GMP from guanine: step 1/1. Its pathway is purine metabolism; XMP biosynthesis via salvage pathway; XMP from xanthine: step 1/1. In terms of biological role, purine salvage pathway enzyme that catalyzes the transfer of the ribosyl-5-phosphate group from 5-phospho-alpha-D-ribose 1-diphosphate (PRPP) to the N9 position of the 6-oxopurines guanine and xanthine to form the corresponding ribonucleotides GMP (guanosine 5'-monophosphate) and XMP (xanthosine 5'-monophosphate), with the release of PPi. To a lesser extent, also acts on hypoxanthine. This is Xanthine-guanine phosphoribosyltransferase from Erwinia tasmaniensis (strain DSM 17950 / CFBP 7177 / CIP 109463 / NCPPB 4357 / Et1/99).